Consider the following 264-residue polypeptide: Acyl-[acyl-carrier-protein]--UDP-N-acetylglucosamine O-acyltransferase (264 aa).

This sequence belongs to the transferase hexapeptide repeat family. LpxA subfamily. In terms of assembly, homotrimer.

The protein resides in the cytoplasm. The catalysed reaction is a (3R)-hydroxyacyl-[ACP] + UDP-N-acetyl-alpha-D-glucosamine = a UDP-3-O-[(3R)-3-hydroxyacyl]-N-acetyl-alpha-D-glucosamine + holo-[ACP]. The protein operates within glycolipid biosynthesis; lipid IV(A) biosynthesis; lipid IV(A) from (3R)-3-hydroxytetradecanoyl-[acyl-carrier-protein] and UDP-N-acetyl-alpha-D-glucosamine: step 1/6. Involved in the biosynthesis of lipid A, a phosphorylated glycolipid that anchors the lipopolysaccharide to the outer membrane of the cell. The chain is Acyl-[acyl-carrier-protein]--UDP-N-acetylglucosamine O-acyltransferase from Rickettsia conorii (strain ATCC VR-613 / Malish 7).